The chain runs to 122 residues: Phospholipase A2 crotoxin basic subunit CBb (122 aa).

7 disulfide bridges follow: Cys-26-Cys-115, Cys-28-Cys-44, Cys-43-Cys-95, Cys-49-Cys-122, Cys-50-Cys-88, Cys-57-Cys-81, and Cys-75-Cys-86. Residues Tyr-27, Gly-29, and Gly-31 each contribute to the Ca(2+) site. Residue His-47 is part of the active site. Position 48 (Asp-48) interacts with Ca(2+). Asp-89 is a catalytic residue.

Belongs to the phospholipase A2 family. Group II subfamily. D49 sub-subfamily. Heterodimer of one of the acidic (CA1, CA2, CA3 or CA4) and one of the basic (CBa1, CBa2, CBb, CBc or CBd) subunits; non-covalently linked. The acidic subunit is non-toxic, without enzymatic activity and comprises 3 peptides that are cross-linked by 5 disulfide bridges. The basic subunit is toxic, has phospholipase A2 activity and is composed of a single chain. Multiple variants of each subunit give different crotoxin complexes that can be subdivided into 2 classes: (1) those of high toxicity, low PLA2 activity (CBb, CBc and CBd linked with high affinity to any CA) and high stability (K(d)=4.5 nM) and (2) those of moderate toxicity, high PLA2 activity (CBa2 linked with low affinity to any CA) and low stability (K(d)=25 nM). Ca(2+) serves as cofactor. Expressed by the venom gland.

The protein resides in the secreted. It catalyses the reaction a 1,2-diacyl-sn-glycero-3-phosphocholine + H2O = a 1-acyl-sn-glycero-3-phosphocholine + a fatty acid + H(+). In terms of biological role, heterodimer CA-CB: Crotoxin is a potent presynaptic neurotoxin that possesses phospholipase A2 (PLA2) activity and exerts a lethal action by blocking neuromuscular transmission. It consists of a non-covalent association of a basic and weakly toxic PLA2 subunit (CBa2, CBb, CBc, or CBd), with a small acidic, non-enzymatic and non-toxic subunit (CA1, CA2, CA3 or CA4). The complex acts by binding to a specific 48-kDa protein (R48) receptor located on presynaptic membranes, forming a transient ternary complex CA-CB-R48, followed by dissociation of the CA-CB complex and release of the CA subunit. At equilibrium, only the CB subunits remain associated with the specific crotoxin receptor. In addition to neurotoxicity, crotoxin has been found to exert myotoxicity, nephrotoxicity, and cardiovascular toxicity. Moreover, anti-inflammatory, immunomodulatory, anti-tumor and analgesic effects of crotoxin have also been reported. Functionally, monomer CBb: The basic subunit of crotoxin is a snake venom phospholipase A2 (PLA2) that exhibits weak neurotoxicity (10-fold less than the heterodimer) and strong anticoagulant effects by binding to factor Xa (F10) and inhibiting the prothrombinase activity. In addition, it shows the same effects described for the heterodimer and binds the nucleotide-binding domain (NBD1) of CFTR chloride channels and increases the channel current. PLA2 catalyzes the calcium-dependent hydrolysis of the 2-acyl groups in 3-sn-phosphoglycerides. In Crotalus durissus terrificus (South American rattlesnake), this protein is Phospholipase A2 crotoxin basic subunit CBb.